Here is a 177-residue protein sequence, read N- to C-terminus: Large ribosomal subunit protein uL6 (177 aa).

Residues 151-177 form a disordered region; sequence YRPPEPYKGKGIRYSDEHVVRKEAKKK. The span at 155–177 shows a compositional bias: basic and acidic residues; sequence EPYKGKGIRYSDEHVVRKEAKKK.

Belongs to the universal ribosomal protein uL6 family. As to quaternary structure, part of the 50S ribosomal subunit.

Its function is as follows. This protein binds to the 23S rRNA, and is important in its secondary structure. It is located near the subunit interface in the base of the L7/L12 stalk, and near the tRNA binding site of the peptidyltransferase center. The protein is Large ribosomal subunit protein uL6 of Psychrobacter sp. (strain PRwf-1).